A 302-amino-acid chain; its full sequence is 33 kDa chaperonin (302 aa).

Intrachain disulfides connect C240/C242 and C273/C276.

The protein belongs to the HSP33 family. Post-translationally, under oxidizing conditions two disulfide bonds are formed involving the reactive cysteines. Under reducing conditions zinc is bound to the reactive cysteines and the protein is inactive.

It localises to the cytoplasm. Functionally, redox regulated molecular chaperone. Protects both thermally unfolding and oxidatively damaged proteins from irreversible aggregation. Plays an important role in the bacterial defense system toward oxidative stress. The sequence is that of 33 kDa chaperonin from Synechocystis sp. (strain ATCC 27184 / PCC 6803 / Kazusa).